We begin with the raw amino-acid sequence, 198 residues long: Nucleoid occlusion factor SlmA (198 aa).

The HTH tetR-type domain maps to Asn-10–Leu-70. Positions Thr-33–Phe-52 form a DNA-binding region, H-T-H motif. Positions Glu-117 to Arg-144 form a coiled coil.

The protein belongs to the nucleoid occlusion factor SlmA family. In terms of assembly, homodimer. Interacts with FtsZ.

It is found in the cytoplasm. It localises to the nucleoid. Functionally, required for nucleoid occlusion (NO) phenomenon, which prevents Z-ring formation and cell division over the nucleoid. Acts as a DNA-associated cell division inhibitor that binds simultaneously chromosomal DNA and FtsZ, and disrupts the assembly of FtsZ polymers. SlmA-DNA-binding sequences (SBS) are dispersed on non-Ter regions of the chromosome, preventing FtsZ polymerization at these regions. In Escherichia coli (strain 55989 / EAEC), this protein is Nucleoid occlusion factor SlmA.